We begin with the raw amino-acid sequence, 94 residues long: C-C motif chemokine 17 (94 aa).

Positions 1 to 23 (MAPLKMLALVILLLGASLQHIHA) are cleaved as a signal peptide. 2 disulfides stabilise this stretch: Cys-33–Cys-57 and Cys-34–Cys-73.

Belongs to the intercrine beta (chemokine CC) family.

Its subcellular location is the secreted. Chemokine, which displays chemotactic activity for T lymphocytes, preferentially Th2 cells, but not monocytes or granulocytes. Therefore plays an important role in a wide range of inflammatory and immunological processes. Acts by binding to CCR4 at T-cell surface. Mediates GM-CSF/CSF2-driven pain and inflammation. In the brain, required to maintain the typical, highly branched morphology of hippocampal microglia under homeostatic conditions. May be important for the appropriate adaptation of microglial morphology and synaptic plasticity to acute lipopolysaccharide (LPS)-induced neuroinflammation. Plays a role in wound healing, mainly by inducing fibroblast migration into the wound. This Macaca mulatta (Rhesus macaque) protein is C-C motif chemokine 17 (CCL17).